Reading from the N-terminus, the 513-residue chain is Coniferin beta-glucosidase (513 aa).

The N-terminal stretch at 1–23 is a signal peptide; it reads MEVSVLMWVLLFYSLLGFQVTTA. Residues Q44, H145, and 190–191 each bind a beta-D-glucoside; that span reads NE. Residue E191 is the Proton donor of the active site. A disulfide bridge connects residues C210 and C219. N223 is a glycosylation site (N-linked (GlcNAc...) asparagine). The a beta-D-glucoside site is built by Y336 and E408. Catalysis depends on E408, which acts as the Nucleophile. A glycan (N-linked (GlcNAc...) asparagine) is linked at N447. A beta-D-glucoside is bound by residues W457, 464–465, and F473; that span reads EW.

The protein belongs to the glycosyl hydrolase 1 family. Homodimer. Glycosylated.

The catalysed reaction is 4-O-(beta-D-glucosyl)-(E)-coniferol + H2O = (E)-coniferol + D-glucose. Inhibited by glucono-1,5-lactone, but not by bromoconduritol or conduritol B epoxide. Involved in the release of monolignols for lignin biosynthesis. Unable to hydrolyze 4-nitrophenyl beta-cellobioside or alpha-linked methylumbelliferyl glucoside. The chain is Coniferin beta-glucosidase from Pinus contorta (Shore pine).